A 182-amino-acid polypeptide reads, in one-letter code: Large ribosomal subunit protein uL6 (182 aa).

It belongs to the universal ribosomal protein uL6 family. As to quaternary structure, part of the 50S ribosomal subunit.

In terms of biological role, this protein binds to the 23S rRNA, and is important in its secondary structure. It is located near the subunit interface in the base of the L7/L12 stalk, and near the tRNA binding site of the peptidyltransferase center. In Trichormus variabilis (strain ATCC 29413 / PCC 7937) (Anabaena variabilis), this protein is Large ribosomal subunit protein uL6.